A 128-amino-acid polypeptide reads, in one-letter code: DNA-directed RNA polymerase subunit omega (128 aa).

Belongs to the RNA polymerase subunit omega family. In terms of assembly, the RNAP catalytic core consists of 2 alpha, 1 beta, 1 beta' and 1 omega subunit. When a sigma factor is associated with the core the holoenzyme is formed, which can initiate transcription.

It catalyses the reaction RNA(n) + a ribonucleoside 5'-triphosphate = RNA(n+1) + diphosphate. In terms of biological role, promotes RNA polymerase assembly. Latches the N- and C-terminal regions of the beta' subunit thereby facilitating its interaction with the beta and alpha subunits. The chain is DNA-directed RNA polymerase subunit omega from Azorhizobium caulinodans (strain ATCC 43989 / DSM 5975 / JCM 20966 / LMG 6465 / NBRC 14845 / NCIMB 13405 / ORS 571).